Reading from the N-terminus, the 247-residue chain is ATP synthase subunit a, chloroplastic (247 aa).

A run of 5 helical transmembrane segments spans residues 38-58 (QVLI…TIAV), 95-115 (VPFI…GALF), 134-154 (INTT…AGLT), 199-219 (LVVV…VMFL), and 220-240 (GLFT…AYIG).

Belongs to the ATPase A chain family. As to quaternary structure, F-type ATPases have 2 components, CF(1) - the catalytic core - and CF(0) - the membrane proton channel. CF(1) has five subunits: alpha(3), beta(3), gamma(1), delta(1), epsilon(1). CF(0) has four main subunits: a, b, b' and c.

The protein localises to the plastid. It localises to the chloroplast thylakoid membrane. Its function is as follows. Key component of the proton channel; it plays a direct role in the translocation of protons across the membrane. In Piper cenocladum (Ant piper), this protein is ATP synthase subunit a, chloroplastic.